Here is a 237-residue protein sequence, read N- to C-terminus: Ribosomal RNA small subunit methyltransferase G (237 aa).

The disordered stretch occupies residues 1-25 (MASRHSPQTAAQPDAADKAQALRLT). A compositionally biased stretch (low complexity) spans 7-21 (PQTAAQPDAADKAQA). 3 residues coordinate S-adenosyl-L-methionine: G85, F90, and R155.

It belongs to the methyltransferase superfamily. RNA methyltransferase RsmG family.

Its subcellular location is the cytoplasm. It catalyses the reaction guanosine(527) in 16S rRNA + S-adenosyl-L-methionine = N(7)-methylguanosine(527) in 16S rRNA + S-adenosyl-L-homocysteine. Its function is as follows. Specifically methylates the N7 position of guanine in position 527 of 16S rRNA. The sequence is that of Ribosomal RNA small subunit methyltransferase G from Rhodopseudomonas palustris (strain HaA2).